We begin with the raw amino-acid sequence, 569 residues long: Potassium-transporting ATPase potassium-binding subunit (569 aa).

10 helical membrane-spanning segments follow: residues 3 to 23 (TEILGVALQILLLLVISYPLG), 64 to 84 (FLKSLLIINVFWFFWGMILLV), 133 to 153 (FVIMLFQFITAATGMAAMAGI), 179 to 199 (ILFPMSLIVGFILIIQGTPMG), 255 to 275 (IVECWSILIIPMALVFALGFY), 281 to 301 (LGYVIYGVMLFAYLLGVFCNV), 375 to 395 (FGGVGVGFMNYYAFLIIAVFI), 421 to 441 (IVSLAHPFVILIFTAISSYVW), 497 to 517 (LALIISRYLPIVGQVAIAGLL), and 535 to 555 (VTFGVMTFFVIVIVAALSFFP).

It belongs to the KdpA family. The system is composed of three essential subunits: KdpA, KdpB and KdpC.

The protein resides in the cell inner membrane. In terms of biological role, part of the high-affinity ATP-driven potassium transport (or Kdp) system, which catalyzes the hydrolysis of ATP coupled with the electrogenic transport of potassium into the cytoplasm. This subunit binds the periplasmic potassium ions and delivers the ions to the membrane domain of KdpB through an intramembrane tunnel. The sequence is that of Potassium-transporting ATPase potassium-binding subunit from Parabacteroides distasonis (strain ATCC 8503 / DSM 20701 / CIP 104284 / JCM 5825 / NCTC 11152).